The primary structure comprises 258 residues: Global transcriptional regulator CodY (258 aa).

Residues 1–156 form a GAF domain region; the sequence is MSSLLDKTRM…SATIIGLEIL (156 aa). Positions 204–223 form a DNA-binding region, H-T-H motif; that stretch reads ASKIADKVGITRSVIVNALR.

The protein belongs to the CodY family.

Its subcellular location is the cytoplasm. DNA-binding global transcriptional regulator which is involved in the adaptive response to starvation and acts by directly or indirectly controlling the expression of numerous genes in response to nutrient availability. During rapid exponential growth, CodY is highly active and represses genes whose products allow adaptation to nutrient depletion. The polypeptide is Global transcriptional regulator CodY (Clostridium botulinum (strain Okra / Type B1)).